Reading from the N-terminus, the 611-residue chain is Dihydroxy-acid dehydratase (611 aa).

Residue D81 coordinates Mg(2+). C122 contacts [2Fe-2S] cluster. Mg(2+)-binding residues include D123 and K124. Residue K124 is modified to N6-carboxylysine. Residue C195 participates in [2Fe-2S] cluster binding. E491 is a binding site for Mg(2+). S517 functions as the Proton acceptor in the catalytic mechanism.

This sequence belongs to the IlvD/Edd family. Homodimer. [2Fe-2S] cluster serves as cofactor. The cofactor is Mg(2+).

It carries out the reaction (2R)-2,3-dihydroxy-3-methylbutanoate = 3-methyl-2-oxobutanoate + H2O. The catalysed reaction is (2R,3R)-2,3-dihydroxy-3-methylpentanoate = (S)-3-methyl-2-oxopentanoate + H2O. The protein operates within amino-acid biosynthesis; L-isoleucine biosynthesis; L-isoleucine from 2-oxobutanoate: step 3/4. It participates in amino-acid biosynthesis; L-valine biosynthesis; L-valine from pyruvate: step 3/4. Functions in the biosynthesis of branched-chain amino acids. Catalyzes the dehydration of (2R,3R)-2,3-dihydroxy-3-methylpentanoate (2,3-dihydroxy-3-methylvalerate) into 2-oxo-3-methylpentanoate (2-oxo-3-methylvalerate) and of (2R)-2,3-dihydroxy-3-methylbutanoate (2,3-dihydroxyisovalerate) into 2-oxo-3-methylbutanoate (2-oxoisovalerate), the penultimate precursor to L-isoleucine and L-valine, respectively. This chain is Dihydroxy-acid dehydratase, found in Brucella canis (strain ATCC 23365 / NCTC 10854 / RM-666).